A 455-amino-acid chain; its full sequence is Phosphoglycerate kinase, glycosomal (455 aa).

Residues Val23, Asp24, Phe25, Asn26, Arg39, Ser61, His62, Gly64, Arg65, Arg132, His168, and Arg169 each coordinate (2R)-3-phosphoglycerate. ADP is bound by residues Gly214 and Ala215. A CDP-binding site is contributed by Gly214. The AMP site is built by Ala215 and Lys216. Ala215 lines the ATP pocket. Ala215 lines the Mg(2+) pocket. Lys216 contacts (2R)-3-phosphoglycerate. Asp219 serves as a coordination point for CDP. Asp219 contacts Mg(2+). 2 residues coordinate ADP: Lys220 and Gly238. An AMP-binding site is contributed by Lys220. Position 220 (Lys220) interacts with ATP. Gly238 contributes to the CDP binding site. AMP is bound by residues Ala239 and Ala311. 2 residues coordinate ATP: Ala239 and Ala311. ADP contacts are provided by Ala311 and Asn335. CDP is bound by residues Gly336 and Phe341. Phe341, Glu342, Asp374, and Thr375 together coordinate ADP. AMP is bound at residue Glu342. ATP contacts are provided by Glu342, Asp374, and Thr375. Mg(2+) is bound at residue Asp374. The topogenic signal stretch occupies residues 417 to 455; it reads DAKAPAAAAAAGGDCPCGSGCAAVPAAATATVSMVLASP.

This sequence belongs to the phosphoglycerate kinase family. In terms of assembly, monomer. Requires Mg(2+) as cofactor.

The protein localises to the glycosome. It catalyses the reaction (2R)-3-phosphoglycerate + ATP = (2R)-3-phospho-glyceroyl phosphate + ADP. It functions in the pathway carbohydrate degradation; glycolysis; pyruvate from D-glyceraldehyde 3-phosphate: step 2/5. The chain is Phosphoglycerate kinase, glycosomal (PGKC) from Crithidia fasciculata.